A 304-amino-acid chain; its full sequence is GTPase Era (304 aa).

The region spanning Tyr-11–Glu-186 is the Era-type G domain. The tract at residues Gly-19–Ser-26 is G1. Gly-19–Ser-26 lines the GTP pocket. The interval Gln-45–His-49 is G2. The tract at residues Asp-66 to Gly-69 is G3. GTP contacts are provided by residues Asp-66–Leu-70 and Asn-128–Asp-131. Positions Asn-128–Asp-131 are G4. Residues Ile-158–Ala-160 are G5. One can recognise a KH type-2 domain in the interval Thr-210 to Ser-287.

The protein belongs to the TRAFAC class TrmE-Era-EngA-EngB-Septin-like GTPase superfamily. Era GTPase family. In terms of assembly, monomer.

It is found in the cytoplasm. It localises to the cell inner membrane. Functionally, an essential GTPase that binds both GDP and GTP, with rapid nucleotide exchange. Plays a role in 16S rRNA processing and 30S ribosomal subunit biogenesis and possibly also in cell cycle regulation and energy metabolism. This chain is GTPase Era, found in Histophilus somni (strain 2336) (Haemophilus somnus).